Consider the following 542-residue polypeptide: CTP synthase (542 aa).

The amidoligase domain stretch occupies residues 1–265 (MTRYIFVTGG…DDFVVERFGL (265 aa)). Ser-13 is a binding site for CTP. Ser-13 is a binding site for UTP. ATP contacts are provided by residues 14–19 (SLGKGI) and Asp-71. Asp-71 and Glu-139 together coordinate Mg(2+). Residues 146-148 (DIE), 186-191 (KTKPTQ), and Lys-222 each bind CTP. UTP is bound by residues 186–191 (KTKPTQ) and Lys-222. The Glutamine amidotransferase type-1 domain maps to 290–541 (TIAMVGKYME…VKAALAQKNK (252 aa)). L-glutamine is bound at residue Gly-351. Cys-378 serves as the catalytic Nucleophile; for glutamine hydrolysis. Residues 379–382 (LGMQ), Glu-402, and Arg-469 each bind L-glutamine. Active-site residues include His-514 and Glu-516.

This sequence belongs to the CTP synthase family. In terms of assembly, homotetramer.

The enzyme catalyses UTP + L-glutamine + ATP + H2O = CTP + L-glutamate + ADP + phosphate + 2 H(+). It catalyses the reaction L-glutamine + H2O = L-glutamate + NH4(+). It carries out the reaction UTP + NH4(+) + ATP = CTP + ADP + phosphate + 2 H(+). It participates in pyrimidine metabolism; CTP biosynthesis via de novo pathway; CTP from UDP: step 2/2. Its activity is regulated as follows. Allosterically activated by GTP, when glutamine is the substrate; GTP has no effect on the reaction when ammonia is the substrate. The allosteric effector GTP functions by stabilizing the protein conformation that binds the tetrahedral intermediate(s) formed during glutamine hydrolysis. Inhibited by the product CTP, via allosteric rather than competitive inhibition. Catalyzes the ATP-dependent amination of UTP to CTP with either L-glutamine or ammonia as the source of nitrogen. Regulates intracellular CTP levels through interactions with the four ribonucleotide triphosphates. This chain is CTP synthase, found in Pseudomonas entomophila (strain L48).